The primary structure comprises 237 residues: Beta-glucanase (237 aa).

The first 23 residues, 1–23 (MKKKSCFTLVTTFAFSLIFSVSA), serve as a signal peptide directing secretion. The GH16 domain occupies 28-237 (VFWEPLSYFN…EYDWVKYTSN (210 aa)). The cysteines at positions 55 and 84 are disulfide-linked. The active-site Nucleophile is the glutamate 128. The active-site Proton donor is glutamate 132.

It belongs to the glycosyl hydrolase 16 family.

The catalysed reaction is Hydrolysis of (1-&gt;4)-beta-D-glucosidic linkages in beta-D-glucans containing (1-&gt;3)- and (1-&gt;4)-bonds.. The polypeptide is Beta-glucanase (Paenibacillus macerans (Bacillus macerans)).